The primary structure comprises 247 residues: VQ motif-containing protein 4 (247 aa).

A disordered region spans residues 1–128; sequence MENSPRYREA…SSSSASGFRL (128 aa). Ser-16 is subject to Phosphoserine. A compositionally biased stretch (low complexity) spans 21 to 37; it reads NSNNSCGMSSSSESNKP. 2 stretches are compositionally biased toward polar residues: residues 48–75 and 87–106; these read RSES…QMLT and LKPN…SSFS. Residues 67–76 carry the VQ motif; the sequence is FKQVVQMLTG. Phosphoserine occurs at positions 106, 155, 163, 165, and 175. The residue at position 178 (Thr-178) is a Phosphothreonine. Residues 184–247 are disordered; the sequence is PFDRSGSSNQ…VSGSSSASTS (64 aa). Ser-194 is modified (phosphoserine). The segment covering 200 to 210 has biased composition (basic and acidic residues); the sequence is AEEKAMKERGF. Position 215 is a phosphoserine (Ser-215). Phosphothreonine occurs at positions 219 and 234. 3 positions are modified to phosphoserine: Ser-235, Ser-239, and Ser-243. Over residues 236–247 the composition is skewed to polar residues; sequence PRVSGSSSASTS.

Interacts with MPK3 and MPK6. Phosphorylated on serine and threonine residues by MPK6 following treatment with the pathogen-associated molecular pattern (PAMP) flg22. MAP kinase-mediated phosphorylation after PAMP elicitation causes degradation of VQ4, allowing WRKY33 to promote transcription from defense genes.

It localises to the nucleus. In terms of biological role, acts as a negative regulator of WRKY33 transcription factor activity in the promotion of defense gene expression. Acts as a negative regulator of pathogen-associated molecular pattern (PAMP)-induced responses to modulate resistance to pathogens. The sequence is that of VQ motif-containing protein 4 from Arabidopsis thaliana (Mouse-ear cress).